Here is a 610-residue protein sequence, read N- to C-terminus: Ubiquilin-like protein (610 aa).

The region spanning 31–105 (IRVIVKTPGN…IHVVIKSKHG (75 aa)) is the Ubiquitin-like domain. The 46-residue stretch at 562–607 (QAPEVRFSKEMECLQAMGFVNYNANLQALIATDGDTNAAIYKLKSS) folds into the UBA domain.

In Mus musculus (Mouse), this protein is Ubiquilin-like protein (Ubqlnl).